The chain runs to 156 residues: Small ribosomal subunit protein uS7c (156 aa).

Belongs to the universal ribosomal protein uS7 family. In terms of assembly, part of the 30S ribosomal subunit.

It localises to the plastid. It is found in the chloroplast. Its function is as follows. One of the primary rRNA binding proteins, it binds directly to 16S rRNA where it nucleates assembly of the head domain of the 30S subunit. The chain is Small ribosomal subunit protein uS7c (rps7) from Mesostigma viride (Green alga).